A 1114-amino-acid chain; its full sequence is MSASTETHHASEAAVPTAPRPRPGLGTKNGRLHQVPHIAGLILGVFSVLVFLWSISPVLRYYVHVPREYVDTYYFDAPDTSLSWALVVALLAAALASRKRIAWWLLTIYLVLFLITNVIVSITDKNVNAMAAAVVQVVLIGILIAARPEFYTRVRRGAGWKALGVLIVGLAIGTLLGWGLVELFPGTLPQNERFLWALNRVTALAAADNEQFTGRPHGFVNTLLGLFGAIALLAAVITLFRAQRSHNALTGNDESALRGLLLQYGADDSLGYFATRRDKAVVFAPSGKAAITYRVELGVCLASGDPIGDPEAWPHAIEEWQALASQYGWATAVMGASETGATAYNKAGLTVLQLGDEAILRTREFNLSGRDMRQVRQAVTRVRRQGVTVRIRRHRDVPAEEMAETIRLADAWRDTETERGFSMALGRLGDRLDGDCLLVEAVAEDGEIDGILSLVPWGPTGVSLDLMRRKPTSPNGVVELMVSELATTSDQFGITKVSLNFAVFRSVFEEGSRIGAGPILRIWRSILVFFSRWWQLEALYRSNVKYQPEWVPRFLCFEDNRELLRVGFASAVAEGFVTLPRFGRSGTRDALEHTGTHAAVPAALVAAEGLHSDGSAPGEGLAPTATGPKRPEQVRVRLDKLAGLAEQGIDPYPVAYPPSHTVTEAVESPEGTTVRIAGRLLRIRDYGGVVFAVVRDWSGDIQILVDEARVGTDRIRAFAAEFDLGDLVEVAGVIGYSRRGALSLLANEWRMTGKCLHPLPDKWKGLSDPETRVRQRYVDLAINSDARRLLEARSAVVKSLRDSLGGRGFLEVETPILQQVHGGANAAPFLTHINAYNLDLYLRIAPELYLKRLCVAGMEKVFEIGRVFRNEGVDFKHNPEFTILEAYEAHSDYEKMMVLCRELIQTAAIAAYGREIIMRPGPDGALVEVDISGEWPVKTMHQAVAEKLGVDVSPETPLTELQRLCDEHEIPYQSTWDAGAVAQEMYEHLVEDYTEFPTFYTNFPTSMSPLTRPHPTIPGVAAKWDLVAWGVELGTAYSELTDPVDQRNRLTEQSMLAAGGDEEAMELDEDFLQALEHAMPPTGGLGMGVDRVVMLITGGSIRETLAFPLAKPRQ.

The segment covering Met1–Ser11 has biased composition (basic and acidic residues). The disordered stretch occupies residues Met1–Gly26. Positions Met1–Gly618 are phosphatidylglycerol lysyltransferase. 6 consecutive transmembrane segments (helical) span residues Ile38–Val58, Ala77–Ser97, Ile101–Ser121, Asn126–Ala146, Gly164–Phe184, and Phe219–Leu239. The lysine--tRNA ligase stretch occupies residues Glu619 to Gln1114. Residues Val674–Met751 constitute a DNA-binding region (OB). Mg(2+)-binding residues include Asp1025 and Glu1032.

This sequence in the N-terminal section; belongs to the LPG synthetase family. In the C-terminal section; belongs to the class-II aminoacyl-tRNA synthetase family. Requires Mg(2+) as cofactor.

It is found in the cell membrane. The enzyme catalyses tRNA(Lys) + L-lysine + ATP = L-lysyl-tRNA(Lys) + AMP + diphosphate. It catalyses the reaction L-lysyl-tRNA(Lys) + a 1,2-diacyl-sn-glycero-3-phospho-(1'-sn-glycerol) = a 1,2-diacyl-sn-glycero-3-phospho-1'-(3'-O-L-lysyl)-sn-glycerol + tRNA(Lys). Its function is as follows. Catalyzes the production of L-lysyl-tRNA(Lys)transfer and the transfer of a lysyl group from L-lysyl-tRNA(Lys) to membrane-bound phosphatidylglycerol (PG), which produces lysylphosphatidylglycerol (LPG), one of the components of the bacterial membrane with a positive net charge. LPG synthesis contributes to the resistance to cationic antimicrobial peptides (CAMPs) and likely protects M.tuberculosis against the CAMPs produced by competiting microorganisms (bacteriocins). In fact, the modification of anionic phosphatidylglycerol with positively charged L-lysine results in repulsion of the peptides. The polypeptide is Lysylphosphatidylglycerol biosynthesis bifunctional protein LysX (lysX) (Rhodococcus jostii (strain RHA1)).